Reading from the N-terminus, the 105-residue chain is MNRLKKGDDVIVIAGKDKGRRGVVKSFAKGGSLVLVEGINIVKKHIKPNPNRGIEDGVVEKELPVDASNVAIFNPATEKADRVGYKFVDEKKVRYFKSNGELVDL.

The protein belongs to the universal ribosomal protein uL24 family. In terms of assembly, part of the 50S ribosomal subunit.

Functionally, one of two assembly initiator proteins, it binds directly to the 5'-end of the 23S rRNA, where it nucleates assembly of the 50S subunit. In terms of biological role, one of the proteins that surrounds the polypeptide exit tunnel on the outside of the subunit. This chain is Large ribosomal subunit protein uL24, found in Francisella tularensis subsp. tularensis (strain FSC 198).